A 662-amino-acid polypeptide reads, in one-letter code: DNA helicase/primase complex-associated protein (662 aa).

Belongs to the herpesviridae HEPA family. As to quaternary structure, associates with the primase and the helicase to form the helicase-primase complex. Interacts with the origin-binding protein. Interacts with the polymerase catalytic subunit.

Its subcellular location is the host nucleus. In terms of biological role, component of the helicase/primase complex. Unwinds the DNA at the replication forks and generates single-stranded DNA for both leading and lagging strand synthesis. The primase synthesizes short RNA primers on the lagging strand that the polymerase presumably elongates using dNTPs. The primase-associated factor has no known catalytic activity in the complex and may serve to facilitate the formation of the replisome by directly interacting with the origin-binding protein and the polymerase. The chain is DNA helicase/primase complex-associated protein (U74) from Human herpesvirus 6A (strain Uganda-1102) (HHV-6 variant A).